The sequence spans 441 residues: Inositol hexakisphosphate kinase 1 (441 aa).

A disordered region spans residues 100–175; the sequence is ETVEQDDTTE…MLDGNSGLSS (76 aa). Basic residues predominate over residues 113-123; that stretch reads PRRKHSRRSLH. Residues 137 to 149 are compositionally biased toward low complexity; that stretch reads SLSLETSESSQEA. Residues 150-160 show a composition bias toward basic and acidic residues; that stretch reads KSPKVELHSHS. Ser151 bears the Phosphoserine mark. 220 to 228 is a binding site for substrate; it reads PCVLDLKMG. The interval 370-392 is disordered; that stretch reads SSCGPSTSPSNTSPEAGPSSQPK. Residues 372–391 show a composition bias toward polar residues; sequence CGPSTSPSNTSPEAGPSSQP.

This sequence belongs to the inositol phosphokinase (IPK) family.

Its subcellular location is the cytoplasm. The protein resides in the nucleus. The enzyme catalyses 1D-myo-inositol hexakisphosphate + ATP = 5-diphospho-1D-myo-inositol 1,2,3,4,6-pentakisphosphate + ADP. It catalyses the reaction 1-diphospho-1D-myo-inositol 2,3,4,5,6-pentakisphosphate + ATP + H(+) = 1,5-bis(diphospho)-1D-myo-inositol 2,3,4,6-tetrakisphosphate + ADP. Converts inositol hexakisphosphate (InsP6) to diphosphoinositol pentakisphosphate (InsP7/PP-InsP5). Converts 1,3,4,5,6-pentakisphosphate (InsP5) to PP-InsP4. This Homo sapiens (Human) protein is Inositol hexakisphosphate kinase 1 (IP6K1).